A 329-amino-acid chain; its full sequence is Tryptophan--tRNA ligase (329 aa).

ATP contacts are provided by residues 9-11 (QPS) and 17-18 (GN). A 'HIGH' region motif is present at residues 10–18 (PSGTITLGN). Aspartate 132 lines the L-tryptophan pocket. Residues 144 to 146 (GDD), valine 183, and 192 to 196 (KMSKS) each bind ATP. The 'KMSKS' region motif lies at 192–196 (KMSKS).

Belongs to the class-I aminoacyl-tRNA synthetase family. As to quaternary structure, homodimer.

It is found in the cytoplasm. It carries out the reaction tRNA(Trp) + L-tryptophan + ATP = L-tryptophyl-tRNA(Trp) + AMP + diphosphate + H(+). Functionally, catalyzes the attachment of tryptophan to tRNA(Trp). The polypeptide is Tryptophan--tRNA ligase (Bacillus anthracis).